Reading from the N-terminus, the 885-residue chain is DNA mismatch repair protein MutS (885 aa).

Residues 1–67 are disordered; the sequence is MAPGEQQLSL…SNNDDEGLPR (67 aa). The segment covering 26–36 has biased composition (basic and acidic residues); sequence SEDKTEESERP. Position 691 to 698 (691 to 698) interacts with ATP; the sequence is GPNASGKS.

Belongs to the DNA mismatch repair MutS family.

This protein is involved in the repair of mismatches in DNA. It is possible that it carries out the mismatch recognition step. This protein has a weak ATPase activity. The sequence is that of DNA mismatch repair protein MutS from Synechococcus sp. (strain RCC307).